A 1026-amino-acid chain; its full sequence is RecBCD enzyme subunit RecB (1026 aa).

Residues 1-438 form the UvrD-like helicase ATP-binding domain; sequence MSSFDIFSPT…LILDTNYRST (438 aa). Residues 1–766 form a DNA-binding and helicase activity, interacts with RecC region; sequence MSSFDIFSPT…LANYANVTKH (766 aa). 21–28 contacts ATP; that stretch reads ASAGTGKT. Positions 815–1026 are nuclease activity, interacts with RecD and RecA; sequence SRTIHSFSST…KGNGFLQPGR (212 aa). 3 residues coordinate Mg(2+): His854, Asp940, and Asp953. Catalysis depends on Asp953, which acts as the For nuclease activity.

It belongs to the helicase family. UvrD subfamily. As to quaternary structure, heterotrimer of RecB, RecC and RecD. All subunits contribute to DNA-binding. Interacts with RecA. Requires Mg(2+) as cofactor.

It carries out the reaction Exonucleolytic cleavage (in the presence of ATP) in either 5'- to 3'- or 3'- to 5'-direction to yield 5'-phosphooligonucleotides.. The enzyme catalyses Couples ATP hydrolysis with the unwinding of duplex DNA by translocating in the 3'-5' direction.. The catalysed reaction is ATP + H2O = ADP + phosphate + H(+). In terms of biological role, a helicase/nuclease that prepares dsDNA breaks (DSB) for recombinational DNA repair. Binds to DSBs and unwinds DNA via a highly rapid and processive ATP-dependent bidirectional helicase activity. Unwinds dsDNA until it encounters a Chi (crossover hotspot instigator) sequence from the 3' direction. Cuts ssDNA a few nucleotides 3' to the Chi site. The properties and activities of the enzyme are changed at Chi. The Chi-altered holoenzyme produces a long 3'-ssDNA overhang and facilitates RecA-binding to the ssDNA for homologous DNA recombination and repair. Holoenzyme degrades any linearized DNA that is unable to undergo homologous recombination. In the holoenzyme this subunit contributes ATPase, 3'-5' helicase, exonuclease activity and loads RecA onto ssDNA. This Chlamydia trachomatis serovar D (strain ATCC VR-885 / DSM 19411 / UW-3/Cx) protein is RecBCD enzyme subunit RecB.